The following is a 101-amino-acid chain: Multivesicular body sorting factor 12 (101 aa).

N-acetylmethionine is present on Met-1. Ser-94 carries the post-translational modification Phosphoserine.

In terms of assembly, component of the ESCRT-I complex (endosomal sorting complex required for transport I) which consists of STP22, VPS28, SRN2 and MVB12 in a 1:1:1:1 stoichiometry. Interacts with STP22 and SRN2.

It localises to the cytoplasm. Its subcellular location is the endosome. It is found in the late endosome membrane. Component of the ESCRT-I complex, a regulator of vesicular trafficking process. Binds to ubiquitinated cargo proteins and is required for the sorting of endocytic ubiquitinated cargos into multivesicular bodies (MVBs). Appears to be involved in cargo sorting and release of the ESCRT-I complex from the MVBs. The sequence is that of Multivesicular body sorting factor 12 (MVB12) from Saccharomyces cerevisiae (strain ATCC 204508 / S288c) (Baker's yeast).